A 379-amino-acid chain; its full sequence is Cytochrome b (379 aa).

4 consecutive transmembrane segments (helical) span residues 34–54 (YGSLLGITLVFQIMTGIMLAM), 78–100 (WMIRFFHGNGASFFFICLYVHIG), 113–133 (TWNIGIIILLLTMATAFLGYV), and 179–199 (FFSLHFLLPFIISAMVMIHLL). 2 residues coordinate heme b: histidine 84 and histidine 98. Residues histidine 183 and histidine 197 each contribute to the heme b site. Histidine 202 contributes to the a ubiquinone binding site. The next 4 helical transmembrane spans lie at 225–245 (FSIKDLITMMLFIMILSFLVL), 289–309 (LGGVIALLMSIMILFFLPIFS), 320–340 (WSGMIFWSFINIIILLTWIGA), and 345–365 (APYIIFGQILSVLYFLTFFWM).

This sequence belongs to the cytochrome b family. In terms of assembly, the main subunits of complex b-c1 are: cytochrome b, cytochrome c1 and the Rieske protein. The cofactor is heme b.

It is found in the mitochondrion inner membrane. Component of the ubiquinol-cytochrome c reductase complex (complex III or cytochrome b-c1 complex) that is part of the mitochondrial respiratory chain. The b-c1 complex mediates electron transfer from ubiquinol to cytochrome c. Contributes to the generation of a proton gradient across the mitochondrial membrane that is then used for ATP synthesis. This chain is Cytochrome b (mt:Cyt-b), found in Epiperipatus biolleyi (Velvet worm).